The sequence spans 434 residues: Putative MgpC-like protein MPN_149 (434 aa).

Disordered stretches follow at residues 168-193 and 215-267; these read GSGQ…PKAV and EPLD…DNNG. Over residues 170-184 the composition is skewed to polar residues; the sequence is GQESSWNSQRSQKVL. Over residues 218–229 the composition is skewed to basic and acidic residues; it reads DSTKDGKGKDES. Residues 248–267 are compositionally biased toward polar residues; it reads STGSQMAAVTDSQQSGDNNG.

Belongs to the MgpC family.

The chain is Putative MgpC-like protein MPN_149 from Mycoplasma pneumoniae (strain ATCC 29342 / M129 / Subtype 1) (Mycoplasmoides pneumoniae).